A 969-amino-acid chain; its full sequence is Aspartic protease 5 (969 aa).

The signal sequence occupies residues 1–22 (MEAGAMGGSSFLSFSSGPSAET). The segment covering 1–45 (MEAGAMGGSSFLSFSSGPSAETSPSSLSPPTSSSPSPSPQLVSDS) has biased composition (low complexity). Disordered stretches follow at residues 1–65 (MEAG…SSRT), 79–104 (ENEAAPTISQEERRGGSMTAASAGHL), 128–149 (SSATSVLSLGGERGRPPSRSSS), 173–193 (SSSSPLSPLPHPRGAPASACG), and 311–382 (FLSL…DLPR). The Lumenal portion of the chain corresponds to 23-820 (SPSSLSPPTS…PEGLPLSPQQ (798 aa)). The segment covering 311–324 (FLSLSSSPRSLASD) has biased composition (low complexity). Residues 335 to 355 (QSREQRGEREGERQRPDKGEE) are compositionally biased toward basic and acidic residues. The Peptidase A1 domain occupies 413–758 (YFLDILVGTP…DREQDRVGFA (346 aa)). The active site involves D431. A disordered region spans residues 608 to 635 (PPESESTPATEALRPVAGESASRRISEK). D682 is an active-site residue. Residues 768–794 (DQRPRGPDSGDGPKGRPTAPFTVPPLR) form a disordered region. The segment covering 769-781 (QRPRGPDSGDGPK) has biased composition (basic and acidic residues). Residues 821–841 (LWVAAALVVVAILIAVTVILL) traverse the membrane as a helical segment. Over 842–969 (HTIKRPSRSS…TLLDLPLGGE (128 aa)) the chain is Cytoplasmic. The tract at residues 922-969 (EDDGDFFGDDSVPSAEEQETAPSLSLREESSPFSASQSTLLDLPLGGE) is disordered. Polar residues predominate over residues 952–961 (SPFSASQSTL).

This sequence belongs to the peptidase A1 family. Post-translationally, may be auto-cleaved to produce a 55 kDa form.

It is found in the golgi apparatus membrane. Its function is as follows. In tachyzoites, plays an essential role in the export of several dense granule proteins into the host cell by cleaving the localization motif RRLxx (termed Toxoplasma export element (TEXEL)) located downstream of the N-terminal secretory signal sequence. However, can also regulate the export of proteins that lack the TEXEL motif, such as GRA24. Requires Arg at P3 and P2, and Leu at P1 in the substrate TEXEL motif and, specifically, cleaves after Leu. Cleaves GRA16; proteolytic cleavage is essential for the correct trafficking of GRA16 from the parasite into the infected host nucleus. Cleaves GRA19 and GRA20. Cleaves MYR1. Cleaves LCAT, GRA44, GRA46, GRA46, ROP35/WNG1 and ROP34/WNG2. By regulating the export of dense granule proteins into the host cell, regulates multiple processes during tachyzoite infection of host cells, including recruitment of host mitochondria to the parasitophorous vacuole (PV), formation of the nanotubular network (NTN) or intravacuolar network (IVN) which are membranous tubules that bud from the PV membrane into the vacuolar lumen and, up-regulation of host cell genes to facilitate the parasite infection and modulate the host innate immune response. At the bradyzoite stage, also involved in the formation of the cyst wall. This chain is Aspartic protease 5, found in Toxoplasma gondii.